Consider the following 503-residue polypeptide: Type II secretion system ATPase E (503 aa).

Zn(2+)-binding residues include C397, C400, C430, and C433.

The protein belongs to the GSP E family. Forms homooligomers; most probably hexamers. Interacts with EpsL/GspL. It depends on Zn(2+) as a cofactor.

It localises to the cell inner membrane. It carries out the reaction ATP + H2O + cellular proteinSide 1 = ADP + phosphate + cellular proteinSide 2.. Functionally, ATPase component of the type II secretion system required for the energy-dependent secretion of extracellular factors such as proteases and toxins from the periplasm. Acts as a molecular motor to provide the energy that is required for assembly of the pseudopilus and the extrusion of substrates generated in the cytoplasm. In Vibrio cholerae serotype O1 (strain ATCC 39315 / El Tor Inaba N16961), this protein is Type II secretion system ATPase E (epsE).